The chain runs to 250 residues: ATP synthase subunit b 2 (250 aa).

The helical transmembrane segment at 2-22 (LIDWFTVFAQILNFVILLGLL) threads the bilayer.

It belongs to the ATPase B chain family. In terms of assembly, F-type ATPases have 2 components, F(1) - the catalytic core - and F(0) - the membrane proton channel. F(1) has five subunits: alpha(3), beta(3), gamma(1), delta(1), epsilon(1). F(0) has four main subunits: a(1), b(1), b'(1) and c(10-14). The alpha and beta chains form an alternating ring which encloses part of the gamma chain. F(1) is attached to F(0) by a central stalk formed by the gamma and epsilon chains, while a peripheral stalk is formed by the delta, b and b' chains.

It is found in the cellular thylakoid membrane. In terms of biological role, f(1)F(0) ATP synthase produces ATP from ADP in the presence of a proton or sodium gradient. F-type ATPases consist of two structural domains, F(1) containing the extramembraneous catalytic core and F(0) containing the membrane proton channel, linked together by a central stalk and a peripheral stalk. During catalysis, ATP synthesis in the catalytic domain of F(1) is coupled via a rotary mechanism of the central stalk subunits to proton translocation. Component of the F(0) channel, it forms part of the peripheral stalk, linking F(1) to F(0). The protein is ATP synthase subunit b 2 of Picosynechococcus sp. (strain ATCC 27264 / PCC 7002 / PR-6) (Agmenellum quadruplicatum).